The primary structure comprises 380 residues: MKAKSLLLALAGLACTFSATAQEATTQNKAGMHTAFQRDKASDHWFIDIAGGAGMALSGWNNDVDFVDRLSIVPTFGIGKWHEPYFGTRLQFTGFDIYGFPQGSKERNHNYFGNAHLDFMFDLTNYFGVYRPNRVFHIIPWAGIGFGYKFHSENANGEKVGSKDDMTGTVNVGLMLKFRLSRVVDFNIEGQAFAGKMNFIGTKRGKADFPVMATAGLTFNLGKTEWTEIVPMDYALVNDLNNQINSLRGQVEELSRRPVSCPECPEPTQPTVTRVVVDNVVYFRINSAKIDRNQEINVYNTAEYAKTNNAPIKVVGYADEKTGTAAYNMKLSERRAKAVAKMLEKYGVSADRITIEWKGSSEQIYEENAWNRIVVMTAAE.

A signal peptide spans 1–21 (MKAKSLLLALAGLACTFSATA). A Pyrrolidone carboxylic acid modification is found at glutamine 22. The OmpA-like domain maps to 270–380 (PTVTRVVVDN…NRIVVMTAAE (111 aa)).

It belongs to the outer membrane OOP (TC 1.B.6) superfamily. In terms of assembly, disulfide-linked heterodimer with Omp41.

The protein resides in the cell outer membrane. In terms of biological role, may have porin activity and function in peptidoglycan binding. In Porphyromonas gingivalis (strain ATCC BAA-308 / W83), this protein is Outer membrane protein 40.